Reading from the N-terminus, the 68-residue chain is DNA-directed RNA polymerase subunit omega (68 aa).

It belongs to the RNA polymerase subunit omega family. In terms of assembly, the RNAP catalytic core consists of 2 alpha, 1 beta, 1 beta' and 1 omega subunit. When a sigma factor is associated with the core the holoenzyme is formed, which can initiate transcription.

The catalysed reaction is RNA(n) + a ribonucleoside 5'-triphosphate = RNA(n+1) + diphosphate. Its function is as follows. Promotes RNA polymerase assembly. Latches the N- and C-terminal regions of the beta' subunit thereby facilitating its interaction with the beta and alpha subunits. The sequence is that of DNA-directed RNA polymerase subunit omega from Trichlorobacter lovleyi (strain ATCC BAA-1151 / DSM 17278 / SZ) (Geobacter lovleyi).